The chain runs to 184 residues: Ribosome-recycling factor (184 aa).

It belongs to the RRF family.

Its subcellular location is the cytoplasm. Responsible for the release of ribosomes from messenger RNA at the termination of protein biosynthesis. May increase the efficiency of translation by recycling ribosomes from one round of translation to another. This Natranaerobius thermophilus (strain ATCC BAA-1301 / DSM 18059 / JW/NM-WN-LF) protein is Ribosome-recycling factor.